The chain runs to 525 residues: GMP synthase [glutamine-hydrolyzing] (525 aa).

A Glutamine amidotransferase type-1 domain is found at 9–207; that stretch reads RILILDFGSQ…VRDICQCEAL (199 aa). Catalysis depends on C86, which acts as the Nucleophile. Residues H181 and E183 contribute to the active site. Positions 208-400 constitute a GMPS ATP-PPase domain; that stretch reads WTPAKIIDDA…LGLPYDMLYR (193 aa). 235 to 241 serves as a coordination point for ATP; sequence SGGVDSS.

In terms of assembly, homodimer.

The catalysed reaction is XMP + L-glutamine + ATP + H2O = GMP + L-glutamate + AMP + diphosphate + 2 H(+). It participates in purine metabolism; GMP biosynthesis; GMP from XMP (L-Gln route): step 1/1. Functionally, catalyzes the synthesis of GMP from XMP. The sequence is that of GMP synthase [glutamine-hydrolyzing] from Escherichia coli O139:H28 (strain E24377A / ETEC).